A 37-amino-acid polypeptide reads, in one-letter code: Large ribosomal subunit protein bL36 (37 aa).

Belongs to the bacterial ribosomal protein bL36 family.

This is Large ribosomal subunit protein bL36 (rpmJ) from Fusobacterium nucleatum subsp. nucleatum (strain ATCC 25586 / DSM 15643 / BCRC 10681 / CIP 101130 / JCM 8532 / KCTC 2640 / LMG 13131 / VPI 4355).